The primary structure comprises 349 residues: [LysW]-L-2-aminoadipate/[LysW]-L-glutamate phosphate reductase (349 aa).

Position 10–13 (10–13 (SGYT)) interacts with NADP(+). Cys150 is a catalytic residue. Residue Asn316 coordinates NADP(+).

Belongs to the NAGSA dehydrogenase family. Type 1 subfamily. LysY sub-subfamily.

Its subcellular location is the cytoplasm. The catalysed reaction is [amino-group carrier protein]-C-terminal-N-(1-carboxy-5-oxopentan-1-yl)-L-glutamine + phosphate + NADP(+) = [amino-group carrier protein]-C-terminal-N-(1-carboxy-5-phosphooxy-5-oxopentan-1-yl)-L-glutamine + NADPH + H(+). It carries out the reaction [amino-group carrier protein]-C-terminal-gamma-(L-glutamyl-5-semialdehyde)-L-glutamate + phosphate + NADP(+) = [amino-group carrier protein]-C-terminal-gamma-(5-phospho-L-glutamyl)-L-glutamate + NADPH + H(+). Its pathway is amino-acid biosynthesis; L-lysine biosynthesis via AAA pathway; L-lysine from L-alpha-aminoadipate (Thermus route): step 3/5. It functions in the pathway amino-acid biosynthesis; L-arginine biosynthesis. Its function is as follows. Involved in both the arginine and lysine biosynthetic pathways. The chain is [LysW]-L-2-aminoadipate/[LysW]-L-glutamate phosphate reductase from Sulfurisphaera tokodaii (strain DSM 16993 / JCM 10545 / NBRC 100140 / 7) (Sulfolobus tokodaii).